A 242-amino-acid chain; its full sequence is Biosynthetic peptidoglycan transglycosylase (242 aa).

A helical membrane pass occupies residues I19 to V39.

Belongs to the glycosyltransferase 51 family.

It is found in the cell inner membrane. The catalysed reaction is [GlcNAc-(1-&gt;4)-Mur2Ac(oyl-L-Ala-gamma-D-Glu-L-Lys-D-Ala-D-Ala)](n)-di-trans,octa-cis-undecaprenyl diphosphate + beta-D-GlcNAc-(1-&gt;4)-Mur2Ac(oyl-L-Ala-gamma-D-Glu-L-Lys-D-Ala-D-Ala)-di-trans,octa-cis-undecaprenyl diphosphate = [GlcNAc-(1-&gt;4)-Mur2Ac(oyl-L-Ala-gamma-D-Glu-L-Lys-D-Ala-D-Ala)](n+1)-di-trans,octa-cis-undecaprenyl diphosphate + di-trans,octa-cis-undecaprenyl diphosphate + H(+). The protein operates within cell wall biogenesis; peptidoglycan biosynthesis. Peptidoglycan polymerase that catalyzes glycan chain elongation from lipid-linked precursors. The sequence is that of Biosynthetic peptidoglycan transglycosylase from Salmonella agona (strain SL483).